The following is a 255-amino-acid chain: Imidazole glycerol phosphate synthase subunit HisF (255 aa).

Active-site residues include Asp-12 and Asp-131.

The protein belongs to the HisA/HisF family. As to quaternary structure, heterodimer of HisH and HisF.

The protein resides in the cytoplasm. It catalyses the reaction 5-[(5-phospho-1-deoxy-D-ribulos-1-ylimino)methylamino]-1-(5-phospho-beta-D-ribosyl)imidazole-4-carboxamide + L-glutamine = D-erythro-1-(imidazol-4-yl)glycerol 3-phosphate + 5-amino-1-(5-phospho-beta-D-ribosyl)imidazole-4-carboxamide + L-glutamate + H(+). It functions in the pathway amino-acid biosynthesis; L-histidine biosynthesis; L-histidine from 5-phospho-alpha-D-ribose 1-diphosphate: step 5/9. IGPS catalyzes the conversion of PRFAR and glutamine to IGP, AICAR and glutamate. The HisF subunit catalyzes the cyclization activity that produces IGP and AICAR from PRFAR using the ammonia provided by the HisH subunit. In Neisseria gonorrhoeae (strain ATCC 700825 / FA 1090), this protein is Imidazole glycerol phosphate synthase subunit HisF.